The primary structure comprises 167 residues: NAD(P)H-quinone oxidoreductase subunit I, chloroplastic (167 aa).

4Fe-4S ferredoxin-type domains are found at residues 55–84 and 95–124; these read GRIH…VDWK and LNYS…MTEE. Positions 64, 67, 70, 74, 104, 107, 110, and 114 each coordinate [4Fe-4S] cluster.

The protein belongs to the complex I 23 kDa subunit family. As to quaternary structure, NDH is composed of at least 16 different subunits, 5 of which are encoded in the nucleus. The cofactor is [4Fe-4S] cluster.

The protein resides in the plastid. Its subcellular location is the chloroplast thylakoid membrane. The catalysed reaction is a plastoquinone + NADH + (n+1) H(+)(in) = a plastoquinol + NAD(+) + n H(+)(out). The enzyme catalyses a plastoquinone + NADPH + (n+1) H(+)(in) = a plastoquinol + NADP(+) + n H(+)(out). Its function is as follows. NDH shuttles electrons from NAD(P)H:plastoquinone, via FMN and iron-sulfur (Fe-S) centers, to quinones in the photosynthetic chain and possibly in a chloroplast respiratory chain. The immediate electron acceptor for the enzyme in this species is believed to be plastoquinone. Couples the redox reaction to proton translocation, and thus conserves the redox energy in a proton gradient. The protein is NAD(P)H-quinone oxidoreductase subunit I, chloroplastic of Eucalyptus globulus subsp. globulus (Tasmanian blue gum).